Reading from the N-terminus, the 144-residue chain is 3-hydroxyacyl-[acyl-carrier-protein] dehydratase FabZ (144 aa).

The active site involves histidine 49.

Belongs to the thioester dehydratase family. FabZ subfamily.

It localises to the cytoplasm. The catalysed reaction is a (3R)-hydroxyacyl-[ACP] = a (2E)-enoyl-[ACP] + H2O. Its function is as follows. Involved in unsaturated fatty acids biosynthesis. Catalyzes the dehydration of short chain beta-hydroxyacyl-ACPs and long chain saturated and unsaturated beta-hydroxyacyl-ACPs. This is 3-hydroxyacyl-[acyl-carrier-protein] dehydratase FabZ from Alkaliphilus oremlandii (strain OhILAs) (Clostridium oremlandii (strain OhILAs)).